Reading from the N-terminus, the 330-residue chain is DNA-directed RNA polymerase subunit alpha (330 aa).

The segment at 1–231 (MAILAFQKPD…IYHFMLFSDE (231 aa)) is alpha N-terminal domain (alpha-NTD). The alpha C-terminal domain (alpha-CTD) stretch occupies residues 253-330 (MRQLLKTKLV…DISKYKLDKE (78 aa)).

The protein belongs to the RNA polymerase alpha chain family. As to quaternary structure, homodimer. The RNAP catalytic core consists of 2 alpha, 1 beta, 1 beta' and 1 omega subunit. When a sigma factor is associated with the core the holoenzyme is formed, which can initiate transcription.

The catalysed reaction is RNA(n) + a ribonucleoside 5'-triphosphate = RNA(n+1) + diphosphate. Functionally, DNA-dependent RNA polymerase catalyzes the transcription of DNA into RNA using the four ribonucleoside triphosphates as substrates. The protein is DNA-directed RNA polymerase subunit alpha of Phocaeicola vulgatus (strain ATCC 8482 / DSM 1447 / JCM 5826 / CCUG 4940 / NBRC 14291 / NCTC 11154) (Bacteroides vulgatus).